The following is a 421-amino-acid chain: Testin (421 aa).

Residues M92 to G199 form the PET domain. Residues E133–C164 form a disordered region. A compositionally biased stretch (basic and acidic residues) spans P155–C164. LIM zinc-binding domains are found at residues Y234–E297, P299–V359, and Q362–S421.

Belongs to the prickle / espinas / testin family. In terms of assembly, interacts via LIM domain 1 with ZYX. Interacts (via LIM domain 3) with ENAH and VASP. Interacts with ALKBH4, talin, actin, alpha-actinin, GRIP1 and PXN. Interacts (via LIM domain 2) with ACTL7A (via N-terminus). Heterodimer with ACTL7A; the heterodimer interacts with ENAH to form a heterotrimer.

Its subcellular location is the cytoplasm. It is found in the cell junction. The protein localises to the focal adhesion. Functionally, scaffold protein that may play a role in cell adhesion, cell spreading and in the reorganization of the actin cytoskeleton. Plays a role in the regulation of cell proliferation. May act as a tumor suppressor. This is Testin (TES) from Oryctolagus cuniculus (Rabbit).